A 483-amino-acid chain; its full sequence is Betaine aldehyde dehydrogenase (483 aa).

Residues I27 and D93 each coordinate K(+). 149 to 151 is a binding site for NAD(+); that stretch reads GAW. Residue K161 is the Charge relay system of the active site. 175-178 contributes to the NAD(+) binding site; the sequence is KPSE. V179 provides a ligand contact to K(+). 228-231 lines the NAD(+) pocket; sequence SVPT. V243 provides a ligand contact to K(+). Catalysis depends on E249, which acts as the Proton acceptor. Positions 251, 283, and 380 each coordinate NAD(+). C283 acts as the Nucleophile in catalysis. C283 is modified (cysteine sulfenic acid (-SOH)). K(+)-binding residues include K450 and G453. Residue E457 is the Charge relay system of the active site.

It belongs to the aldehyde dehydrogenase family. Dimer of dimers. It depends on K(+) as a cofactor.

It carries out the reaction betaine aldehyde + NAD(+) + H2O = glycine betaine + NADH + 2 H(+). It participates in amine and polyamine biosynthesis; betaine biosynthesis via choline pathway; betaine from betaine aldehyde: step 1/1. Its function is as follows. Involved in the biosynthesis of the osmoprotectant glycine betaine. Catalyzes the irreversible oxidation of betaine aldehyde to the corresponding acid. The polypeptide is Betaine aldehyde dehydrogenase (Cereibacter sphaeroides (strain ATCC 17029 / ATH 2.4.9) (Rhodobacter sphaeroides)).